The sequence spans 81 residues: YcgL domain-containing protein Tgr7_3126 (81 aa).

Residues 1–81 enclose the YcgL domain; the sequence is MQVYVYKSRR…QMPPQNERPL (81 aa).

This Thioalkalivibrio sulfidiphilus (strain HL-EbGR7) protein is YcgL domain-containing protein Tgr7_3126.